Reading from the N-terminus, the 536-residue chain is Arylsulfatase (536 aa).

Residues aspartate 13, aspartate 14, and cysteine 51 each contribute to the Ca(2+) site. The Nucleophile role is filled by cysteine 51. At cysteine 51 the chain carries 3-oxoalanine (Cys). Histidine 115 is an active-site residue. 2 residues coordinate Ca(2+): aspartate 317 and asparagine 318.

The protein belongs to the sulfatase family. Monomer. The cofactor is Ca(2+). Post-translationally, the conversion to 3-oxoalanine (also known as C-formylglycine, FGly), of a serine or cysteine residue in prokaryotes and of a cysteine residue in eukaryotes, is critical for catalytic activity.

Its subcellular location is the cytoplasm. The catalysed reaction is an aryl sulfate + H2O = a phenol + sulfate + H(+). In terms of biological role, hydrolyzes the bond between sulfate and the aromatic ring in a compound such as 4-nitrocatechol sulfate. This chain is Arylsulfatase (atsA), found in Pseudomonas aeruginosa (strain ATCC 15692 / DSM 22644 / CIP 104116 / JCM 14847 / LMG 12228 / 1C / PRS 101 / PAO1).